The chain runs to 220 residues: HTH-type transcriptional repressor KstR (220 aa).

Residues 36–96 (RERRKRILDA…SALGREFSRI (61 aa)) enclose the HTH tetR-type domain. The H-T-H motif DNA-binding region spans 59–78 (QMRAVADRADVAVGTLYRYF).

Homodimer.

Controls the expression of genes used for utilizing diverse lipids as energy sources. This Mycobacterium tuberculosis (strain ATCC 25618 / H37Rv) protein is HTH-type transcriptional repressor KstR (kstR).